Consider the following 264-residue polypeptide: Glutamate racemase (264 aa).

Residues 10-11 (DS) and 42-43 (YG) contribute to the substrate site. Cys-73 functions as the Proton donor/acceptor in the catalytic mechanism. Residue 74 to 75 (NT) participates in substrate binding. The Proton donor/acceptor role is filled by Cys-183. A substrate-binding site is contributed by 184 to 185 (TH).

The protein belongs to the aspartate/glutamate racemases family.

It catalyses the reaction L-glutamate = D-glutamate. It functions in the pathway cell wall biogenesis; peptidoglycan biosynthesis. Its function is as follows. Provides the (R)-glutamate required for cell wall biosynthesis. The sequence is that of Glutamate racemase from Streptococcus uberis (strain ATCC BAA-854 / 0140J).